The sequence spans 158 residues: Large ribosomal subunit protein uL11 (158 aa).

This sequence belongs to the universal ribosomal protein uL11 family. As to quaternary structure, part of the ribosomal stalk of the 50S ribosomal subunit. Interacts with L10 and the large rRNA to form the base of the stalk. L10 forms an elongated spine to which L12 dimers bind in a sequential fashion forming a multimeric L10(L12)X complex.

Forms part of the ribosomal stalk which helps the ribosome interact with GTP-bound translation factors. The sequence is that of Large ribosomal subunit protein uL11 from Methanosphaerula palustris (strain ATCC BAA-1556 / DSM 19958 / E1-9c).